A 420-amino-acid polypeptide reads, in one-letter code: MLPGLRRLLQAPASACLLLMLLALPLAAPSCPMLCTCYSSPPTVSCQANNFSSVPLSLPPSTQRLFLQNNLIRTLRPGTFGSNLLTLWLFSNNLSTIYPGTFRHLQALEELDLGDNRHLRSLEPDTFQGLERLQSLHLYRCQLSSLPGNIFRGLVSLQYLYLQENSLLHLQDDLFADLANLSHLFLHGNRLRLLTEHVFRGLGSLDRLLLHGNRLQGVHRAAFRGLSRLTILYLFNNSLASLPGEALADLPSLEFLRLNANPWACDCRARPLWAWFQRARVSSSDVTCATPPERQGRDLRALREADFQACPPAAPTRPGSRARGNSSSNHLYGVAEAGAPPADPSTLYRDLPAEDSRGRQGGDAPTEDDYWGGYGGEDQRGEQMCPGAACQAPPDSRGPALSAGLPSPLLCLLLLVPHHL.

Residues 1–46 form the signal peptide; the sequence is MLPGLRRLLQAPASACLLLMLLALPLAAPSCPMLCTCYSSPPTVSC. 2 disulfide bridges follow: Cys-31–Cys-37 and Cys-35–Cys-46. Residues 47-60 enclose the LRRNT domain; sequence QANNFSSVPLSLPP. Asn-50 carries an N-linked (GlcNAc...) asparagine glycan. LRR repeat units lie at residues 61-82, 83-104, 107-129, 132-153, 156-177, 180-201, 204-225, and 228-249; these read STQRLFLQNNLIRTLRPGTFGS, NLLTLWLFSNNLSTIYPGTFRH, ALEELDLGDNRHLRSLEPDTFQG, RLQSLHLYRCQLSSLPGNIFRG, SLQYLYLQENSLLHLQDDLFAD, NLSHLFLHGNRLRLLTEHVFRG, SLDRLLLHGNRLQGVHRAAFRG, and RLTILYLFNNSLASLPGEALAD. An N-linked (GlcNAc...) asparagine glycan is attached at Asn-93. Asn-236 carries an N-linked (GlcNAc...) asparagine glycan. The LRRCT domain occupies 261–312; it reads NPWACDCRARPLWAWFQRARVSSSDVTCATPPERQGRDLRALREADFQACPP. 2 disulfide bridges follow: Cys-265–Cys-288 and Cys-267–Cys-310. The segment at 308-399 is disordered; sequence QACPPAAPTR…CQAPPDSRGP (92 aa). The segment at 315 to 327 is important for interaction with MAG; the sequence is PTRPGSRARGNSS. The span at 351–360 shows a compositional bias: basic and acidic residues; that stretch reads LPAEDSRGRQ. Residue Cys-390 is the site of GPI-anchor amidated cysteine attachment. Positions 391–420 are cleaved as a propeptide — removed in mature form; the sequence is QAPPDSRGPALSAGLPSPLLCLLLLVPHHL.

Belongs to the Nogo receptor family. As to quaternary structure, interaction with MAG is controversial, and may be indirect. Does not interact with MAG, OMG and RTN4. Interacts with MAG. Post-translationally, undergoes zinc metalloproteinase-mediated ectodomain shedding in neuroblastoma cells; is released both as a full-length ectodomain and an N-terminal fragment containing the leucine-rich repeat (LRR) region of the protein. N-glycosylated. As to expression, highly expressed in brain and liver. Expressed at lower levels in kidney, mammary gland, placenta, skeletal muscle, spleen and thyroid.

The protein resides in the cell membrane. The protein localises to the membrane raft. Its subcellular location is the cell projection. It is found in the dendrite. It localises to the perikaryon. The protein resides in the axon. Its function is as follows. Cell surface receptor that plays a functionally redundant role in the inhibition of neurite outgrowth mediated by MAG. Plays a functionally redundant role in postnatal brain development. Contributes to normal axon migration across the brain midline and normal formation of the corpus callosum. Does not seem to play a significant role in regulating axon regeneration in the adult central nervous system. Protects motoneurons against apoptosis; protection against apoptosis is probably mediated by MAG. Like other family members, plays a role in restricting the number dendritic spines and the number of synapses that are formed during brain development. Signaling mediates activation of Rho and downstream reorganization of the actin cytoskeleton. This chain is Reticulon-4 receptor-like 2, found in Homo sapiens (Human).